A 256-amino-acid chain; its full sequence is MLEFYGKRFESRLLLGTAQYPSPSILADAVRASLSRIVTVSLRRESGEARAGQDFWALIKALGVAVLPNTAGCHTPREAITTAHMAREVFGTNWIKLEVIGDTDTLQPDPFGLVEAARILCDEGFEVFPYMNDDLIVAERLIEAGCKVLMPWGAPIGSGRGFNNPYALKTMRAHFPDIPLVVDAGIGVPSHAAAAMELGFDAVLINTAVAKAGDPAAMARAFALAVEAGRLAYEADPIEARDMASPSTPLLGKAFL.

The active-site Schiff-base intermediate with DXP is the lysine 96. Residues glycine 157, 184 to 185 (AG), and 206 to 207 (NT) contribute to the 1-deoxy-D-xylulose 5-phosphate site.

This sequence belongs to the ThiG family. In terms of assembly, homotetramer. Forms heterodimers with either ThiH or ThiS.

Its subcellular location is the cytoplasm. It carries out the reaction [ThiS sulfur-carrier protein]-C-terminal-Gly-aminoethanethioate + 2-iminoacetate + 1-deoxy-D-xylulose 5-phosphate = [ThiS sulfur-carrier protein]-C-terminal Gly-Gly + 2-[(2R,5Z)-2-carboxy-4-methylthiazol-5(2H)-ylidene]ethyl phosphate + 2 H2O + H(+). The protein operates within cofactor biosynthesis; thiamine diphosphate biosynthesis. Functionally, catalyzes the rearrangement of 1-deoxy-D-xylulose 5-phosphate (DXP) to produce the thiazole phosphate moiety of thiamine. Sulfur is provided by the thiocarboxylate moiety of the carrier protein ThiS. In vitro, sulfur can be provided by H(2)S. The polypeptide is Thiazole synthase (Brucella melitensis biotype 2 (strain ATCC 23457)).